A 1715-amino-acid chain; its full sequence is Protein PHYLLO, chloroplastic (1715 aa).

Residues 1–19 constitute a chloroplast transit peptide; the sequence is MRSSFLVSNPPFLPSLIPR. An inactive isochorismate synthase region spans residues 20–273; that stretch reads YSSRKSIRRS…EKSIFQVSSH (254 aa). Positions 363 to 933 are 2-succinyl-5-enolpyruvyl-6-hydroxy-3-cyclohexene-1-carboxylate synthase; that stretch reads NAVWASAIIE…GTKSELEDAL (571 aa). The helical transmembrane segment at 429–449 threads the bilayer; the sequence is AVIITSSGTAVSNLLPAVVEA. An O-succinylbenzoate synthase region spans residues 981-1364; it reads FLHPMIKNVL…SEDVMMNTLG (384 aa). The Proton donor; for the o-succinylbenzoate synthase activity role is filled by Lys1170. Mg(2+)-binding residues include Asp1202, Glu1228, and Asp1251. Lys1279 serves as the catalytic Proton acceptor; for the o-succinylbenzoate synthase activity. The tract at residues 1418 to 1715 is 2-succinyl-6-hydroxy-2,4-cyclohexadiene-1-carboxylate synthase; it reads HFIRVHDVGE…QKLLLALKEM (298 aa). The 106-residue stretch at 1435–1540 folds into the AB hydrolase-1 domain; it reads LFLHGFLGTG…EGAVVVSGSP (106 aa).

This sequence in the N-terminal section; belongs to the isochorismate synthase family. In the 2nd section; belongs to the TPP enzyme family. MenD subfamily. It in the 3rd section; belongs to the mandelate racemase/muconate lactonizing enzyme family. MenC type 1 subfamily. The protein in the C-terminal section; belongs to the AB hydrolase superfamily. MenH family. The cofactor is Mg(2+). Requires Mn(2+) as cofactor. Thiamine diphosphate is required as a cofactor.

It is found in the plastid. The protein localises to the chloroplast membrane. The enzyme catalyses isochorismate + 2-oxoglutarate + H(+) = 5-enolpyruvoyl-6-hydroxy-2-succinyl-cyclohex-3-ene-1-carboxylate + CO2. It carries out the reaction (1R,6R)-6-hydroxy-2-succinyl-cyclohexa-2,4-diene-1-carboxylate = 2-succinylbenzoate + H2O. The catalysed reaction is 5-enolpyruvoyl-6-hydroxy-2-succinyl-cyclohex-3-ene-1-carboxylate = (1R,6R)-6-hydroxy-2-succinyl-cyclohexa-2,4-diene-1-carboxylate + pyruvate. Functionally, multifunctional enzyme required for phylloquinone (vitamin K1) biosynthesis. The sequence is that of Protein PHYLLO, chloroplastic (PHYLLO) from Arabidopsis thaliana (Mouse-ear cress).